The primary structure comprises 456 residues: Bifunctional protein GlmU (456 aa).

A pyrophosphorylase region spans residues 1 to 229; the sequence is MSNSAMSVVI…LSEVEGVNNR (229 aa). UDP-N-acetyl-alpha-D-glucosamine is bound by residues 11 to 14, Lys25, Gln76, 81 to 82, 103 to 105, Gly140, Glu154, Asn169, and Asn227; these read LAAG, GT, and YGD. Asp105 is a binding site for Mg(2+). Mg(2+) is bound at residue Asn227. The interval 230-250 is linker; that stretch reads LQLSALERVYQREQADRLLLA. An N-acetyltransferase region spans residues 251-456; the sequence is GVMLLDPARF…SGWQRPVKKK (206 aa). UDP-N-acetyl-alpha-D-glucosamine is bound by residues Arg333 and Lys351. His363 acts as the Proton acceptor in catalysis. Positions 366 and 377 each coordinate UDP-N-acetyl-alpha-D-glucosamine. Acetyl-CoA-binding positions include Ala380, 386–387, Ser405, Ala423, and Arg440; that span reads NY.

It in the N-terminal section; belongs to the N-acetylglucosamine-1-phosphate uridyltransferase family. In the C-terminal section; belongs to the transferase hexapeptide repeat family. In terms of assembly, homotrimer. The cofactor is Mg(2+).

Its subcellular location is the cytoplasm. The catalysed reaction is alpha-D-glucosamine 1-phosphate + acetyl-CoA = N-acetyl-alpha-D-glucosamine 1-phosphate + CoA + H(+). The enzyme catalyses N-acetyl-alpha-D-glucosamine 1-phosphate + UTP + H(+) = UDP-N-acetyl-alpha-D-glucosamine + diphosphate. It functions in the pathway nucleotide-sugar biosynthesis; UDP-N-acetyl-alpha-D-glucosamine biosynthesis; N-acetyl-alpha-D-glucosamine 1-phosphate from alpha-D-glucosamine 6-phosphate (route II): step 2/2. Its pathway is nucleotide-sugar biosynthesis; UDP-N-acetyl-alpha-D-glucosamine biosynthesis; UDP-N-acetyl-alpha-D-glucosamine from N-acetyl-alpha-D-glucosamine 1-phosphate: step 1/1. It participates in bacterial outer membrane biogenesis; LPS lipid A biosynthesis. Functionally, catalyzes the last two sequential reactions in the de novo biosynthetic pathway for UDP-N-acetylglucosamine (UDP-GlcNAc). The C-terminal domain catalyzes the transfer of acetyl group from acetyl coenzyme A to glucosamine-1-phosphate (GlcN-1-P) to produce N-acetylglucosamine-1-phosphate (GlcNAc-1-P), which is converted into UDP-GlcNAc by the transfer of uridine 5-monophosphate (from uridine 5-triphosphate), a reaction catalyzed by the N-terminal domain. This is Bifunctional protein GlmU from Pectobacterium carotovorum subsp. carotovorum (strain PC1).